Here is a 158-residue protein sequence, read N- to C-terminus: Cyclic pyranopterin monophosphate synthase (158 aa).

Substrate is bound by residues 75–77 (LCH) and 113–114 (ME). Residue D128 is part of the active site.

This sequence belongs to the MoaC family. Homohexamer; trimer of dimers.

It carries out the reaction (8S)-3',8-cyclo-7,8-dihydroguanosine 5'-triphosphate = cyclic pyranopterin phosphate + diphosphate. It functions in the pathway cofactor biosynthesis; molybdopterin biosynthesis. Its function is as follows. Catalyzes the conversion of (8S)-3',8-cyclo-7,8-dihydroguanosine 5'-triphosphate to cyclic pyranopterin monophosphate (cPMP). The protein is Cyclic pyranopterin monophosphate synthase of Paraburkholderia phytofirmans (strain DSM 17436 / LMG 22146 / PsJN) (Burkholderia phytofirmans).